Reading from the N-terminus, the 188-residue chain is Ribosome-recycling factor (188 aa).

It belongs to the RRF family.

The protein resides in the cytoplasm. Its function is as follows. Responsible for the release of ribosomes from messenger RNA at the termination of protein biosynthesis. May increase the efficiency of translation by recycling ribosomes from one round of translation to another. This chain is Ribosome-recycling factor, found in Anaeromyxobacter dehalogenans (strain 2CP-C).